A 401-amino-acid chain; its full sequence is MTLPKIKQVRAWFTGGATAEKGAGGGDYHDQGANHWIDDHIATPMSKYRDYEQSRQSFGINVLGTLVVEVEAENGQTGFAVSTAGEMGCFIVEKHLNRFIEGKCVSDIKLIHDQMLSATLYYSGSGGLVMNTISCVDLALWDLFGKVVGLPVYKLLGGAVRDEIQFYATGARPDLAKEMGFIGGKMPTHWGPHDGDAGIRKDAAMVADMREKCGEDFWLMLDCWMSQDVNYATKLAHACAPYNLKWIEECLPPQQYESYRELKRNAPVGMMVTSGEHHGTLQSFRTLSETGIDIMQPDVGWCGGLTTLVEIAAIAKSRGQLVVPHGSSVYSHHAVITFTNTPFSEFLMTSPDCSTMRPQFDPILLNEPVPVNGRIHKSVLDKPGFGVELNRDCNLKRPYSH.

Positions 29 and 55 each coordinate substrate. D222, E248, and E276 together coordinate Mg(2+). H325 acts as the Proton acceptor in catalysis. E345 serves as a coordination point for substrate.

Belongs to the mandelate racemase/muconate lactonizing enzyme family. RhamD subfamily. As to quaternary structure, homooctamer; tetramer of dimers. Mg(2+) is required as a cofactor.

It carries out the reaction L-rhamnonate = 2-dehydro-3-deoxy-L-rhamnonate + H2O. Catalyzes the dehydration of L-rhamnonate to 2-keto-3-deoxy-L-rhamnonate (KDR). Can also dehydrate L-lyxonate, L-mannonate and D-gulonate, although less efficiently, but not 2-keto-4-hydroxyheptane-1,7-dioate. The polypeptide is L-rhamnonate dehydratase (rhmD) (Escherichia coli (strain K12)).